A 1045-amino-acid polypeptide reads, in one-letter code: MNKTNPERKISLTSFKERMACKEKPRDLQVLLIISIVLSCSFAVSATVEEANALLKWKSTFTNQTSSSKLSSWVNPNTSSFCTSWYGVACSLGSIIRLNLTNTGIEGTFEDFPFSSLPNLTFVDLSMNRFSGTISPLWGRFSKLEYFDLSINQLVGEIPPELGDLSNLDTLHLVENKLNGSIPSEIGRLTKVTEIAIYDNLLTGPIPSSFGNLTKLVNLYLFINSLSGSIPSEIGNLPNLRELCLDRNNLTGKIPSSFGNLKNVTLLNMFENQLSGEIPPEIGNMTALDTLSLHTNKLTGPIPSTLGNIKTLAVLHLYLNQLNGSIPPELGEMESMIDLEISENKLTGPVPDSFGKLTALEWLFLRDNQLSGPIPPGIANSTELTVLQLDTNNFTGFLPDTICRGGKLENLTLDDNHFEGPVPKSLRDCKSLIRVRFKGNSFSGDISEAFGVYPTLNFIDLSNNNFHGQLSANWEQSQKLVAFILSNNSITGAIPPEIWNMTQLSQLDLSSNRITGELPESISNINRISKLQLNGNRLSGKIPSGIRLLTNLEYLDLSSNRFSSEIPPTLNNLPRLYYMNLSRNDLDQTIPEGLTKLSQLQMLDLSYNQLDGEISSQFRSLQNLERLDLSHNNLSGQIPPSFKDMLALTHVDVSHNNLQGPIPDNAAFRNAPPDAFEGNKDLCGSVNTTQGLKPCSITSSKKSHKDRNLIIYILVPIIGAIIILSVCAGIFICFRKRTKQIEEHTDSESGGETLSIFSFDGKVRYQEIIKATGEFDPKYLIGTGGHGKVYKAKLPNAIMAVKKLNETTDSSISNPSTKQEFLNEIRALTEIRHRNVVKLFGFCSHRRNTFLVYEYMERGSLRKVLENDDEAKKLDWGKRINVVKGVAHALSYMHHDRSPAIVHRDISSGNILLGEDYEAKISDFGTAKLLKPDSSNWSAVAGTYGYVAPELAYAMKVTEKCDVYSFGVLTLEVIKGEHPGDLVSTLSSSPPDATLSLKSISDHRLPEPTPEIKEEVLEILKVALLCLHSDPQARPTMLSISTAFS.

A signal peptide spans 1–43; the sequence is MNKTNPERKISLTSFKERMACKEKPRDLQVLLIISIVLSCSFA. The Extracellular portion of the chain corresponds to 44–709; the sequence is VSATVEEANA…SKKSHKDRNL (666 aa). Asparagine 63, asparagine 77, asparagine 99, and asparagine 119 each carry an N-linked (GlcNAc...) asparagine glycan. LRR repeat units follow at residues 92–116, 117–140, 141–165, 166–189, 191–212, 213–237, 238–260, 262–285, 286–309, 311–333, 334–356, 357–381, 383–405, 406–429, 431–452, 453–476, 477–501, 502–525, 527–549, 550–573, 575–597, 598–620, 621–644, and 646–670; these read LGSIIRLNLTNTGIEGTFEDFPFSS, LPNLTFVDLSMNRFSGTISPLWGR, FSKLEYFDLSINQLVGEIPPELGDL, SNLDTLHLVENKLNGSIPSEIGRL, KVTEIAIYDNLLTGPIPSSFGN, LTKLVNLYLFINSLSGSIPSEIGNL, PNLRELCLDRNNLTGKIPSSFGN, KNVTLLNMFENQLSGEIPPEIGNM, TALDTLSLHTNKLTGPIPSTLGNI, TLAVLHLYLNQLNGSIPPELGEM, ESMIDLEISENKLTGPVPDSFGK, LTALEWLFLRDNQLSGPIPPGIANS, ELTVLQLDTNNFTGFLPDTICRG, GKLENLTLDDNHFEGPVPKSLRDC, SLIRVRFKGNSFSGDISEAFGV, YPTLNFIDLSNNNFHGQLSANWEQ, SQKLVAFILSNNSITGAIPPEIWNM, TQLSQLDLSSNRITGELPESISNI, RISKLQLNGNRLSGKIPSGIRLL, TNLEYLDLSSNRFSSEIPPTLNNL, RLYYMNLSRNDLDQTIPEGLTKL, SQLQMLDLSYNQLDGEISSQFRS, LQNLERLDLSHNNLSGQIPPSFKD, and LALTHVDVSHNNLQGPIPDNAAFRN. N-linked (GlcNAc...) asparagine glycosylation is found at asparagine 179 and asparagine 212. Asparagine 249, asparagine 263, and asparagine 284 each carry an N-linked (GlcNAc...) asparagine glycan. Asparagine 323 carries N-linked (GlcNAc...) asparagine glycosylation. N-linked (GlcNAc...) asparagine glycosylation is found at asparagine 380, asparagine 393, and asparagine 410. 2 N-linked (GlcNAc...) asparagine glycosylation sites follow: asparagine 487 and asparagine 500. Asparagine 580 carries N-linked (GlcNAc...) asparagine glycosylation. The N-linked (GlcNAc...) asparagine glycan is linked to asparagine 633. The N-linked (GlcNAc...) asparagine glycan is linked to asparagine 687. A helical transmembrane segment spans residues 710 to 730; sequence IIYILVPIIGAIIILSVCAGI. Residues 731 to 1045 lie on the Cytoplasmic side of the membrane; the sequence is FICFRKRTKQ…TMLSISTAFS (315 aa). Threonine 772 carries the phosphothreonine modification. The region spanning 775–1045 is the Protein kinase domain; it reads FDPKYLIGTG…TMLSISTAFS (271 aa). Residues 781–789 and lysine 802 contribute to the ATP site; that span reads IGTGGHGKV. Phosphotyrosine is present on residues tyrosine 853 and tyrosine 892. The active-site Proton acceptor is aspartate 905. Residue serine 938 is modified to Phosphoserine. A phosphotyrosine mark is found at tyrosine 946 and tyrosine 953.

It belongs to the protein kinase superfamily. Ser/Thr protein kinase family. As to quaternary structure, interacts with MDIS1 and LURE1.2. Binds to SCOOP12; this interaction triggers the formation of complex between MIK2 and the BAK1/SERK3 and SERK4 coreceptors. As to expression, expressed in pollen tubes. Highly expressed in shoots, roots and leaves.

It is found in the cell membrane. The catalysed reaction is L-seryl-[protein] + ATP = O-phospho-L-seryl-[protein] + ADP + H(+). It catalyses the reaction L-threonyl-[protein] + ATP = O-phospho-L-threonyl-[protein] + ADP + H(+). In terms of biological role, acts as a receptor of SCOOP peptides from Brassicaceae plants regulating multiple processing including plant growth, development and stress responses. Perception of SCOOP peptides induces the association of MIK2 with the coreceptors BAK1/SERK3 and SERK4 and relays the signaling through the activation of receptor-like cytosolic kinases (RLCKs) BIK1 and PBL1. Also able to detect SCOOP-like proteins (SCOOPL) present in fungal Fusarium spp. and bacterial Comamonadaceae to elicit various immune responses, including growth inhibition, ROS production, calcium Ca(2+) influx, MAPK activation and MYB51 promoter activation in roots, thus being required for resistance to several root pathogens. Involved in the pollen tube perception of the female signal. Required to trigger defense responses toward generalist herbivores such as Spodoptera littoralis, probably via the activation of jasmonate and indole glucosinolate biosynthesis. The chain is MDIS1-interacting receptor like kinase 2 from Arabidopsis thaliana (Mouse-ear cress).